A 358-amino-acid chain; its full sequence is Carbamoyl phosphate synthase small chain (358 aa).

Residues 1–168 (MKRLLLLEDG…TKLAYASPGV (168 aa)) form a CPSase region. Residues S45, G219, and G221 each coordinate L-glutamine. Residues 171–357 (NIVLVDFGLK…INMIDDFQQK (187 aa)) enclose the Glutamine amidotransferase type-1 domain. Residue C246 is the Nucleophile of the active site. 5 residues coordinate L-glutamine: M247, Q250, N288, G290, and Y291. Catalysis depends on residues H330 and D332.

Belongs to the CarA family. Composed of two chains; the small (or glutamine) chain promotes the hydrolysis of glutamine to ammonia, which is used by the large (or ammonia) chain to synthesize carbamoyl phosphate. Tetramer of heterodimers (alpha,beta)4.

It carries out the reaction hydrogencarbonate + L-glutamine + 2 ATP + H2O = carbamoyl phosphate + L-glutamate + 2 ADP + phosphate + 2 H(+). The catalysed reaction is L-glutamine + H2O = L-glutamate + NH4(+). It participates in amino-acid biosynthesis; L-arginine biosynthesis; carbamoyl phosphate from bicarbonate: step 1/1. The protein operates within pyrimidine metabolism; UMP biosynthesis via de novo pathway; (S)-dihydroorotate from bicarbonate: step 1/3. Its function is as follows. Small subunit of the glutamine-dependent carbamoyl phosphate synthetase (CPSase). CPSase catalyzes the formation of carbamoyl phosphate from the ammonia moiety of glutamine, carbonate, and phosphate donated by ATP, constituting the first step of 2 biosynthetic pathways, one leading to arginine and/or urea and the other to pyrimidine nucleotides. The small subunit (glutamine amidotransferase) binds and cleaves glutamine to supply the large subunit with the substrate ammonia. The chain is Carbamoyl phosphate synthase small chain from Streptococcus agalactiae serotype III (strain NEM316).